The primary structure comprises 504 residues: Peptidyl-prolyl cis-trans isomerase CYP57 (504 aa).

Serine 2 carries the N-acetylserine modification. The PPIase cyclophilin-type domain occupies 16-167 (IVNTTHGPID…DPAPKILSVE (152 aa)). Residues 204–274 (NLLSFGEEAE…AKKEAAQKDK (71 aa)) adopt a coiled-coil conformation. Basic and acidic residues-rich tracts occupy residues 237–275 (RLLKAEASDKERNASESKEVLSVREALNAKKEAAQKDKS), 344–354 (EDEKPRMEKLS), and 364–374 (AKAEHMEKGDT). Disordered stretches follow at residues 237–374 (RLLK…KGDT), 416–441 (AKPFTSSNEPVVLTSSSEPVDNKEED), and 482–504 (EKFNRMQAKQKRREREWSGKSLA). Residues 416-434 (AKPFTSSNEPVVLTSSSEP) show a composition bias toward polar residues. Residues 494-504 (REREWSGKSLA) are compositionally biased toward basic and acidic residues.

The protein belongs to the cyclophilin-type PPIase family. In terms of tissue distribution, ubiquitous.

It localises to the nucleus. Its subcellular location is the cytoplasm. The catalysed reaction is [protein]-peptidylproline (omega=180) = [protein]-peptidylproline (omega=0). In terms of biological role, PPIases accelerate the folding of proteins. It catalyzes the cis-trans isomerization of proline imidic peptide bonds in oligopeptides. Involved in plant response to pathogen infection by increasing PAD4 expression in absence of EDS1 up-regulation. This Arabidopsis thaliana (Mouse-ear cress) protein is Peptidyl-prolyl cis-trans isomerase CYP57 (CYP57).